Reading from the N-terminus, the 288-residue chain is 33 kDa chaperonin (288 aa).

Intrachain disulfides connect Cys235/Cys237 and Cys268/Cys271.

This sequence belongs to the HSP33 family. Post-translationally, under oxidizing conditions two disulfide bonds are formed involving the reactive cysteines. Under reducing conditions zinc is bound to the reactive cysteines and the protein is inactive.

The protein resides in the cytoplasm. Its function is as follows. Redox regulated molecular chaperone. Protects both thermally unfolding and oxidatively damaged proteins from irreversible aggregation. Plays an important role in the bacterial defense system toward oxidative stress. The protein is 33 kDa chaperonin of Streptococcus thermophilus (strain ATCC BAA-250 / LMG 18311).